The sequence spans 90 residues: Small ribosomal subunit protein uS15c (90 aa).

This sequence belongs to the universal ribosomal protein uS15 family. As to quaternary structure, part of the 30S ribosomal subunit.

It localises to the plastid. The protein resides in the chloroplast. In Dioscorea elephantipes (Elephant's foot yam), this protein is Small ribosomal subunit protein uS15c (rps15).